Reading from the N-terminus, the 56-residue chain is Large ribosomal subunit protein bL32 (56 aa).

Positions 1–34 (MAVQQNKPTRSKRGMRRSHDALTTSTVSVDKASG) are disordered.

The protein belongs to the bacterial ribosomal protein bL32 family.

This chain is Large ribosomal subunit protein bL32, found in Sodalis glossinidius (strain morsitans).